Reading from the N-terminus, the 343-residue chain is tRNA N6-adenosine threonylcarbamoyltransferase (343 aa).

Fe cation contacts are provided by His120 and His124. Substrate-binding positions include 142-146, Asp175, Gly188, Asp192, and Asn281; that span reads VVSGG. Asp310 contributes to the Fe cation binding site.

The protein belongs to the KAE1 / TsaD family. Requires Fe(2+) as cofactor.

The protein localises to the cytoplasm. It catalyses the reaction L-threonylcarbamoyladenylate + adenosine(37) in tRNA = N(6)-L-threonylcarbamoyladenosine(37) in tRNA + AMP + H(+). Required for the formation of a threonylcarbamoyl group on adenosine at position 37 (t(6)A37) in tRNAs that read codons beginning with adenine. Is involved in the transfer of the threonylcarbamoyl moiety of threonylcarbamoyl-AMP (TC-AMP) to the N6 group of A37, together with TsaE and TsaB. TsaD likely plays a direct catalytic role in this reaction. The chain is tRNA N6-adenosine threonylcarbamoyltransferase from Bacillus thuringiensis (strain Al Hakam).